The chain runs to 126 residues: Histone H2B 1.1 (126 aa).

Residues 1 to 12 are compositionally biased toward low complexity; it reads MPEPAKSAPAPK. The disordered stretch occupies residues 1–35; that stretch reads MPEPAKSAPAPKKGSKKAVTKTQKKDGKKRRKSRK. Residues Lys6 and Lys13 each carry the N6-acetyllysine modification. At Ser15 the chain carries Phosphoserine. An N6-acetyllysine mark is found at Lys16 and Lys21. Ser113 is a glycosylation site (O-linked (GlcNAc) serine). Lys121 participates in a covalent cross-link: Glycyl lysine isopeptide (Lys-Gly) (interchain with G-Cter in ubiquitin).

This sequence belongs to the histone H2B family. The nucleosome is a histone octamer containing two molecules each of H2A, H2B, H3 and H4 assembled in one H3-H4 heterotetramer and two H2A-H2B heterodimers. The octamer wraps approximately 147 bp of DNA. In terms of processing, monoubiquitination of Lys-121 by BRE1 gives a specific tag for epigenetic transcriptional activation and is also prerequisite for histone H3 'Lys-4' and 'Lys-79' methylation. Phosphorylated on Ser-15 during developmentally programmed apoptosis; which may facilitate apoptotic chromatin condensation. Post-translationally, glcNAcylation at Ser-113 promotes monoubiquitination of Lys-121. It fluctuates in response to extracellular glucose, and associates with transcribed genes.

Its subcellular location is the nucleus. The protein localises to the chromosome. Its function is as follows. Core component of nucleosome. Nucleosomes wrap and compact DNA into chromatin, limiting DNA accessibility to the cellular machineries which require DNA as a template. Histones thereby play a central role in transcription regulation, DNA repair, DNA replication and chromosomal stability. DNA accessibility is regulated via a complex set of post-translational modifications of histones, also called histone code, and nucleosome remodeling. The sequence is that of Histone H2B 1.1 from Xenopus laevis (African clawed frog).